The following is a 72-amino-acid chain: Gas vesicle protein A (72 aa).

This sequence belongs to the gas vesicle GvpA family. As to quaternary structure, the gas vesicle shell is 2 nm thick and consists of a single layer of this protein. It forms helical ribs nearly perpendicular to the long axis of the vesicle.

Its subcellular location is the gas vesicle shell. Functionally, gas vesicles are hollow, gas filled proteinaceous nanostructures found in some microorganisms. During planktonic growth they allow positioning of the organism at a favorable depth for light or nutrient acquisition. GvpA forms the protein shell. This Pseudanabaena galeata (strain PCC 6901) protein is Gas vesicle protein A.